Consider the following 1194-residue polypeptide: Immunoglobulin superfamily member 3 (1194 aa).

A signal peptide spans 1-19 (MKCFFPVLSCLAVLGVVSA). Ig-like C2-type domains are found at residues 20–138 (QRQV…AKMN), 143–262 (PDSL…WYAM), 276–386 (PTDK…KTVT), 401–539 (PIVV…VSIT), 545–661 (FAVT…WTRL), 676–803 (PVTK…EEVS), 813–945 (PDSR…TAVT), and 949–1097 (PDAA…YRLT). The Extracellular portion of the chain corresponds to 20–1124 (QRQVTVQEGP…LQSLICSNDA (1105 aa)). 2 disulfides stabilise this stretch: Cys-42–Cys-120 and Cys-167–Cys-246. An N-linked (GlcNAc...) asparagine glycan is attached at Asn-43. Residues 250–252 (EWI) carry the EWI motif motif. Cys-302 and Cys-376 are joined by a disulfide. Residue Asn-418 is glycosylated (N-linked (GlcNAc...) asparagine). Intrachain disulfides connect Cys-432/Cys-511, Cys-566/Cys-645, Cys-701/Cys-782, Cys-838/Cys-918, and Cys-974/Cys-1080. Asn-842 carries N-linked (GlcNAc...) asparagine glycosylation. Residues 997–1030 (GGGKRGSLGIDEQEEEEEEEDISQEEDSEDPTER) form a disordered region. The segment covering 1007 to 1026 (DEQEEEEEEEDISQEEDSED) has biased composition (acidic residues). A glycan (N-linked (GlcNAc...) asparagine) is linked at Asn-1077. Residues 1125–1145 (LFYFVFFYPFPIFGILIITIL) traverse the membrane as a helical segment. Over 1146-1194 (LVRFKSRNSSKNSEGKNGVPLLWIKEPHLNYSPTCLEPPVLSIHPGAID) the chain is Cytoplasmic.

In terms of tissue distribution, expressed in the lacrimal duct and lacrimal gland.

The protein localises to the membrane. The sequence is that of Immunoglobulin superfamily member 3 (Igsf3) from Mus musculus (Mouse).